Consider the following 386-residue polypeptide: Succinate--CoA ligase [ADP-forming] subunit beta (386 aa).

The ATP-grasp domain maps to 9–244 (KAVLRSYGVS…LDEEDSKEIE (236 aa)). ATP contacts are provided by residues Lys46, 53 to 55 (GRG), Glu99, Cys102, and Glu107. Positions 199 and 213 each coordinate Mg(2+). Substrate is bound by residues Asn264 and 321-323 (GIM).

It belongs to the succinate/malate CoA ligase beta subunit family. As to quaternary structure, heterotetramer of two alpha and two beta subunits. The cofactor is Mg(2+).

It catalyses the reaction succinate + ATP + CoA = succinyl-CoA + ADP + phosphate. The catalysed reaction is GTP + succinate + CoA = succinyl-CoA + GDP + phosphate. It participates in carbohydrate metabolism; tricarboxylic acid cycle; succinate from succinyl-CoA (ligase route): step 1/1. Succinyl-CoA synthetase functions in the citric acid cycle (TCA), coupling the hydrolysis of succinyl-CoA to the synthesis of either ATP or GTP and thus represents the only step of substrate-level phosphorylation in the TCA. The beta subunit provides nucleotide specificity of the enzyme and binds the substrate succinate, while the binding sites for coenzyme A and phosphate are found in the alpha subunit. In Bacillus cereus (strain G9842), this protein is Succinate--CoA ligase [ADP-forming] subunit beta.